A 429-amino-acid chain; its full sequence is 3-oxo-tetronate kinase (429 aa).

Residues Ser268, 366–369 (GGET), and Gly410 each bind ATP.

The protein belongs to the four-carbon acid sugar kinase family.

It catalyses the reaction 3-dehydro-L-erythronate + ATP = 3-dehydro-4-O-phospho-L-erythronate + ADP + H(+). The enzyme catalyses 3-dehydro-D-erythronate + ATP = 3-dehydro-4-O-phospho-D-erythronate + ADP + H(+). Its function is as follows. Catalyzes the ATP-dependent phosphorylation of 3-oxo-tetronate to 3-oxo-tetronate 4-phosphate. The chain is 3-oxo-tetronate kinase from Pseudomonas savastanoi pv. phaseolicola (strain 1448A / Race 6) (Pseudomonas syringae pv. phaseolicola (strain 1448A / Race 6)).